We begin with the raw amino-acid sequence, 372 residues long: F-box/kelch-repeat protein At5g49000 (372 aa).

Positions 1 to 11 (MSSPERKRKKR) are enriched in basic residues. The disordered stretch occupies residues 1-24 (MSSPERKRKKRSLEPSPESTPNPS). Residues 19-65 (STPNPSLPDDLIVSILARVSRLYYPILSLVSKSSRTLVTSPELYKTR) form the F-box domain. Kelch repeat units follow at residues 131–177 (NIYA…VVDG), 179–224 (IYVA…VIEG), 226–271 (IYIF…LYCY), and 273–312 (PGGI…GGKM).

This Arabidopsis thaliana (Mouse-ear cress) protein is F-box/kelch-repeat protein At5g49000.